The sequence spans 534 residues: Phosphoenolpyruvate carboxykinase (ATP) (534 aa).

3 residues coordinate substrate: arginine 60, tyrosine 195, and lysine 201. Residues lysine 201, histidine 221, and 237–245 (GLSGTGKTT) contribute to the ATP site. Residues lysine 201 and histidine 221 each coordinate Mn(2+). Aspartate 258 is a Mn(2+) binding site. Residues glutamate 287, arginine 324, and threonine 449 each contribute to the ATP site. Arginine 324 serves as a coordination point for substrate.

It belongs to the phosphoenolpyruvate carboxykinase (ATP) family. It depends on Mn(2+) as a cofactor.

Its subcellular location is the cytoplasm. The catalysed reaction is oxaloacetate + ATP = phosphoenolpyruvate + ADP + CO2. Its pathway is carbohydrate biosynthesis; gluconeogenesis. Functionally, involved in the gluconeogenesis. Catalyzes the conversion of oxaloacetate (OAA) to phosphoenolpyruvate (PEP) through direct phosphoryl transfer between the nucleoside triphosphate and OAA. The polypeptide is Phosphoenolpyruvate carboxykinase (ATP) (Flavobacterium johnsoniae (strain ATCC 17061 / DSM 2064 / JCM 8514 / BCRC 14874 / CCUG 350202 / NBRC 14942 / NCIMB 11054 / UW101) (Cytophaga johnsonae)).